The following is a 955-amino-acid chain: Reversion-inducing cysteine-rich protein with Kazal motifs (955 aa).

Positions 1 to 22 (MSGCLQILTVLLCCRFWALVFS) are cleaved as a signal peptide. One copy of the Knot 1 repeat lies at 28-75 (CVHHAADIPRCRDACEQLASIRSESRLRHLLHRLPSYCPETLSELWIC). Residues 28–326 (CVHHAADIPR…NPVEMDLITC (299 aa)) are 5 X Knot repeats. Asparagine 77 carries N-linked (GlcNAc...) asparagine glycosylation. 2 Knot repeats span residues 95–132 (CCELAISAECRRDCKQASSKNDISKVCKKDTENPLYSC) and 142–188 (CCSY…LILC). Asparagine 191 carries N-linked (GlcNAc...) asparagine glycosylation. Knot repeat units lie at residues 207 to 254 (CCDR…LWQC) and 282 to 326 (CCFK…LITC). Residues asparagine 287 and asparagine 375 are each glycosylated (N-linked (GlcNAc...) asparagine). Kazal-like domains are found at residues 615-661 (LFTG…SCRS), 686-741 (DLSE…HCQD), and 742-778 (ACRRPREVCAHNGESYSTVCEAFSERVAVDYQGRCHA). Disulfide bonds link cysteine 621–cysteine 646, cysteine 623–cysteine 642, cysteine 631–cysteine 659, cysteine 704–cysteine 724, and cysteine 713–cysteine 739. A lipid anchor (GPI-anchor amidated serine) is attached at serine 931. Residues 932–955 (SCVSISVCVLLLLCSLILTLTSDL) constitute a propeptide that is removed on maturation.

The protein belongs to the RECK family. In terms of assembly, interacts (via knot repeats) with wnt7a (via disordered linker region); the interaction is direct. Interacts (via knot repeats) with wnt7b (via disordered linker region); the interaction is direct. Interacts with adgra2; the interaction is direct. In terms of tissue distribution, expressed in the cerebral endothelium.

Its subcellular location is the cell membrane. Its function is as follows. Functions together with adgra2 to enable brain endothelial cells to selectively respond to Wnt7 signals (wnt7a or wnt7b). Plays a key role in Wnt7-specific responses: required for central nervous system (CNS) angiogenesis and blood-brain barrier regulation. Acts as a Wnt7-specific coactivator of canonical Wnt signaling by decoding Wnt ligands: acts by interacting specifically with the disordered linker region of Wnt7, thereby conferring ligand selectivity for Wnt7. Adgra2 is then required to deliver reck-bound Wnt7 to frizzled by assembling a higher-order RECK-ADGRA2-Fzd-LRP5-LRP6 complex. Also acts as a serine protease inhibitor. This Danio rerio (Zebrafish) protein is Reversion-inducing cysteine-rich protein with Kazal motifs.